Reading from the N-terminus, the 206-residue chain is Small ribosomal subunit protein uS4 (206 aa).

Residues 96 to 156 (GRLDNVVYRM…EKAKKQSRVK (61 aa)) form the S4 RNA-binding domain.

Belongs to the universal ribosomal protein uS4 family. In terms of assembly, part of the 30S ribosomal subunit. Contacts protein S5. The interaction surface between S4 and S5 is involved in control of translational fidelity.

In terms of biological role, one of the primary rRNA binding proteins, it binds directly to 16S rRNA where it nucleates assembly of the body of the 30S subunit. Functionally, with S5 and S12 plays an important role in translational accuracy. In Erwinia tasmaniensis (strain DSM 17950 / CFBP 7177 / CIP 109463 / NCPPB 4357 / Et1/99), this protein is Small ribosomal subunit protein uS4.